The following is a 498-amino-acid chain: Galactose-1-phosphate uridylyltransferase (498 aa).

Belongs to the galactose-1-phosphate uridylyltransferase type 2 family.

Its subcellular location is the cytoplasm. The enzyme catalyses alpha-D-galactose 1-phosphate + UDP-alpha-D-glucose = alpha-D-glucose 1-phosphate + UDP-alpha-D-galactose. Its pathway is carbohydrate metabolism; galactose metabolism. This chain is Galactose-1-phosphate uridylyltransferase, found in Latilactobacillus sakei subsp. sakei (strain 23K) (Lactobacillus sakei subsp. sakei).